The chain runs to 747 residues: DNA ligase (747 aa).

NAD(+)-binding positions include 113 to 117 (DRAYD), 161 to 162 (SI), and Glu-190. Lys-192 acts as the N6-AMP-lysine intermediate in catalysis. 4 residues coordinate NAD(+): Arg-213, Glu-249, Lys-364, and Lys-388. Zn(2+)-binding residues include Cys-479, Cys-482, Cys-495, and Cys-501. Positions 660–747 (TTNAPLSDLT…EHDDTLTWPP (88 aa)) constitute a BRCT domain.

The protein belongs to the NAD-dependent DNA ligase family. LigA subfamily. Requires Mg(2+) as cofactor. It depends on Mn(2+) as a cofactor.

The enzyme catalyses NAD(+) + (deoxyribonucleotide)n-3'-hydroxyl + 5'-phospho-(deoxyribonucleotide)m = (deoxyribonucleotide)n+m + AMP + beta-nicotinamide D-nucleotide.. In terms of biological role, DNA ligase that catalyzes the formation of phosphodiester linkages between 5'-phosphoryl and 3'-hydroxyl groups in double-stranded DNA using NAD as a coenzyme and as the energy source for the reaction. It is essential for DNA replication and repair of damaged DNA. The sequence is that of DNA ligase from Haloquadratum walsbyi (strain DSM 16790 / HBSQ001).